Here is a 251-residue protein sequence, read N- to C-terminus: BRI3-binding protein (251 aa).

The next 4 membrane-spanning stretches (helical) occupy residues 13–33, 125–145, 146–166, and 185–205; these read AGLLLLLLLLLLLGLLAPGAQ, ALLLVGVVLLAYWFLSLTLGF, TFSVLHVVFGRFFWIVRVVLF, and VLPLCFVVAVYFMTGPMGFYW. A coiled-coil region spans residues 217–247; that stretch reads NPSVEEKLEHLEKQVRLLNIRLNRVLESLDR. At Lys229 the chain carries N6-acetyllysine. A Phosphoserine modification is found at Ser248.

As to quaternary structure, interacts with LETMD1. Interacts with BRI3 (isoforms 1 and 2); the interaction with isoform 2 is weaker than with isoform 1. Interacts with BRI3; the interaction is weak. Interacts with TMEM238L. In terms of tissue distribution, most abundantly expressed in brain, liver and kidney. Overexpressed in leukemia and lymphoma cell lines, as well as in various carcinomas.

The protein resides in the mitochondrion outer membrane. Its function is as follows. Involved in tumorigenesis and may function by stabilizing p53/TP53. This is BRI3-binding protein from Homo sapiens (Human).